The primary structure comprises 526 residues: Probable DNA ligase (526 aa).

Glu228 contacts ATP. The active-site N6-AMP-lysine intermediate is the Lys230. The ATP site is built by Arg235, Arg250, Glu279, Phe319, Arg391, and Lys397.

This sequence belongs to the ATP-dependent DNA ligase family. Requires Mg(2+) as cofactor.

The enzyme catalyses ATP + (deoxyribonucleotide)n-3'-hydroxyl + 5'-phospho-(deoxyribonucleotide)m = (deoxyribonucleotide)n+m + AMP + diphosphate.. In terms of biological role, DNA ligase that seals nicks in double-stranded DNA during DNA replication, DNA recombination and DNA repair. The protein is Probable DNA ligase of Mycobacterium avium (strain 104).